A 212-amino-acid chain; its full sequence is Hemagglutinin 2 (212 aa).

The protein localises to the secreted. Its function is as follows. Induces agglutination of neuraminidase-treated erythrocytes. In Eikenella corrodens, this protein is Hemagglutinin 2 (hag2).